We begin with the raw amino-acid sequence, 108 residues long: Histone H4 (108 aa).

The disordered stretch occupies residues 1 to 24; it reads MTGRGKGGKVLSLGGKGGKGAKRH. Residues 17–21 mediate DNA binding; the sequence is GGKGA.

The protein belongs to the histone H4 family. The nucleosome is a histone octamer containing two molecules each of H2A, H2B, H3 and H4 assembled in one H3-H4 heterotetramer and two H2A-H2B heterodimers. The octamer wraps approximately 147 bp of DNA.

It is found in the nucleus. It localises to the chromosome. In terms of biological role, core component of nucleosome. Nucleosomes wrap and compact DNA into chromatin, limiting DNA accessibility to the cellular machineries which require DNA as a template. Histones thereby play a central role in transcription regulation, DNA repair, DNA replication and chromosomal stability. DNA accessibility is regulated via a complex set of post-translational modifications of histones, also called histone code, and nucleosome remodeling. The chain is Histone H4 from Mastigamoeba balamuthi (Phreatamoeba balamuthi).